The chain runs to 417 residues: MDKLVIQGGVPLRGAIAVSGSKNAALPILMASILAEEPITYTNVPRLRDIFTTNKLLAILGCPAEFDGHTVTVTPCDLKPEAPYDLVKTMRASVLCLGPLLARLGEARVALPGGCAIGARPVDLHLTALEKMGATFDLDSGYIQGRCKKLRGAHIHFDFPTVGGTENLLMAATLAEGETILENVAREPEVVDLANFLIACGAKIEGHGSSVIKVQGVPRLGGCEYRIMPDRIEAGTFMVAAGITGGDLLLTDCPFEELEAVIAKLRDMGLIIEREGTRDVRVTHNGHLRARDVTTRPFPGFPTDMQAQIMALMTIASGAGVVEETIFENRFMHVPELVRMGADVKLSGHSAMVRGVQKLIGAPVMASDLRASASLVLAGLAAQGETHVQRIYHLDRGYERIEEKLNAVGARITRMPE.

22–23 (KN) provides a ligand contact to phosphoenolpyruvate. Position 91 (Arg-91) interacts with UDP-N-acetyl-alpha-D-glucosamine. The active-site Proton donor is Cys-115. At Cys-115 the chain carries 2-(S-cysteinyl)pyruvic acid O-phosphothioketal. UDP-N-acetyl-alpha-D-glucosamine is bound by residues 120–124 (RPVDL), Asp-304, and Ile-326.

The protein belongs to the EPSP synthase family. MurA subfamily.

It is found in the cytoplasm. The enzyme catalyses phosphoenolpyruvate + UDP-N-acetyl-alpha-D-glucosamine = UDP-N-acetyl-3-O-(1-carboxyvinyl)-alpha-D-glucosamine + phosphate. It participates in cell wall biogenesis; peptidoglycan biosynthesis. In terms of biological role, cell wall formation. Adds enolpyruvyl to UDP-N-acetylglucosamine. In Nitratidesulfovibrio vulgaris (strain DSM 19637 / Miyazaki F) (Desulfovibrio vulgaris), this protein is UDP-N-acetylglucosamine 1-carboxyvinyltransferase.